Consider the following 396-residue polypeptide: Ornithine aminotransferase (396 aa).

The residue at position 255 (Lys-255) is an N6-(pyridoxal phosphate)lysine.

Belongs to the class-III pyridoxal-phosphate-dependent aminotransferase family. OAT subfamily. The cofactor is pyridoxal 5'-phosphate.

Its subcellular location is the cytoplasm. It catalyses the reaction a 2-oxocarboxylate + L-ornithine = L-glutamate 5-semialdehyde + an L-alpha-amino acid. The protein operates within amino-acid biosynthesis; L-proline biosynthesis; L-glutamate 5-semialdehyde from L-ornithine: step 1/1. Catalyzes the interconversion of ornithine to glutamate semialdehyde. This is Ornithine aminotransferase from Bacillus cereus (strain Q1).